The sequence spans 346 residues: Holliday junction branch migration complex subunit RuvB (346 aa).

The large ATPase domain (RuvB-L) stretch occupies residues 1–182 (MSERLVTSNE…FGVLCSMEYY (182 aa)). ATP contacts are provided by residues Leu21, Arg22, Gly63, Lys66, Thr67, Thr68, 129–131 (EDY), Arg172, Tyr182, and Arg219. Thr67 lines the Mg(2+) pocket. A small ATPAse domain (RuvB-S) region spans residues 183–253 (TDEQLKEIII…AAKKSLEILE (71 aa)). Positions 256–346 (GEGFDRIDNK…DSKQCTLFEK (91 aa)) are head domain (RuvB-H). Residues Arg311 and Arg316 each contribute to the DNA site.

Belongs to the RuvB family. Homohexamer. Forms an RuvA(8)-RuvB(12)-Holliday junction (HJ) complex. HJ DNA is sandwiched between 2 RuvA tetramers; dsDNA enters through RuvA and exits via RuvB. An RuvB hexamer assembles on each DNA strand where it exits the tetramer. Each RuvB hexamer is contacted by two RuvA subunits (via domain III) on 2 adjacent RuvB subunits; this complex drives branch migration. In the full resolvosome a probable DNA-RuvA(4)-RuvB(12)-RuvC(2) complex forms which resolves the HJ.

It is found in the cytoplasm. The catalysed reaction is ATP + H2O = ADP + phosphate + H(+). The RuvA-RuvB-RuvC complex processes Holliday junction (HJ) DNA during genetic recombination and DNA repair, while the RuvA-RuvB complex plays an important role in the rescue of blocked DNA replication forks via replication fork reversal (RFR). RuvA specifically binds to HJ cruciform DNA, conferring on it an open structure. The RuvB hexamer acts as an ATP-dependent pump, pulling dsDNA into and through the RuvAB complex. RuvB forms 2 homohexamers on either side of HJ DNA bound by 1 or 2 RuvA tetramers; 4 subunits per hexamer contact DNA at a time. Coordinated motions by a converter formed by DNA-disengaged RuvB subunits stimulates ATP hydrolysis and nucleotide exchange. Immobilization of the converter enables RuvB to convert the ATP-contained energy into a lever motion, pulling 2 nucleotides of DNA out of the RuvA tetramer per ATP hydrolyzed, thus driving DNA branch migration. The RuvB motors rotate together with the DNA substrate, which together with the progressing nucleotide cycle form the mechanistic basis for DNA recombination by continuous HJ branch migration. Branch migration allows RuvC to scan DNA until it finds its consensus sequence, where it cleaves and resolves cruciform DNA. This is Holliday junction branch migration complex subunit RuvB from Clostridium perfringens (strain ATCC 13124 / DSM 756 / JCM 1290 / NCIMB 6125 / NCTC 8237 / Type A).